Consider the following 266-residue polypeptide: uncharacterized protein (266 aa).

2 disordered regions span residues 50-116 (GGSR…DFAD) and 128-224 (EEER…PTSG). Residues 78–90 (APDPPAGNQPPAL) show a composition bias toward pro residues. Residues 94-108 (GDGGNESGAGGGESG) show a composition bias toward gly residues. Basic and acidic residues predominate over residues 129–161 (EERRLQYPRETTKRTETVDERKRERSRSPRRDA). The span at 166–176 (PRAAPAAAPRA) shows a compositional bias: low complexity.

This is an uncharacterized protein from Homo sapiens (Human).